A 186-amino-acid polypeptide reads, in one-letter code: Lipoprotein signal peptidase (186 aa).

3 helical membrane passes run Trp11 to Val31, Val44 to Gly64, and Val70 to Ser90. Catalysis depends on residues Asp128 and Asp150. The helical transmembrane segment at Ala145–Ile165 threads the bilayer.

It belongs to the peptidase A8 family.

Its subcellular location is the cell inner membrane. The enzyme catalyses Release of signal peptides from bacterial membrane prolipoproteins. Hydrolyzes -Xaa-Yaa-Zaa-|-(S,diacylglyceryl)Cys-, in which Xaa is hydrophobic (preferably Leu), and Yaa (Ala or Ser) and Zaa (Gly or Ala) have small, neutral side chains.. The protein operates within protein modification; lipoprotein biosynthesis (signal peptide cleavage). This protein specifically catalyzes the removal of signal peptides from prolipoproteins. The polypeptide is Lipoprotein signal peptidase (Treponema pallidum (strain Nichols)).